We begin with the raw amino-acid sequence, 259 residues long: Tryptophan synthase alpha chain (259 aa).

Residues Glu-42 and Asp-53 each act as proton acceptor in the active site.

This sequence belongs to the TrpA family. In terms of assembly, tetramer of two alpha and two beta chains.

It carries out the reaction (1S,2R)-1-C-(indol-3-yl)glycerol 3-phosphate + L-serine = D-glyceraldehyde 3-phosphate + L-tryptophan + H2O. It functions in the pathway amino-acid biosynthesis; L-tryptophan biosynthesis; L-tryptophan from chorismate: step 5/5. Its function is as follows. The alpha subunit is responsible for the aldol cleavage of indoleglycerol phosphate to indole and glyceraldehyde 3-phosphate. This Erythrobacter litoralis (strain HTCC2594) protein is Tryptophan synthase alpha chain.